The chain runs to 411 residues: Gamma-glutamyl phosphate reductase (411 aa).

It belongs to the gamma-glutamyl phosphate reductase family.

The protein localises to the cytoplasm. The catalysed reaction is L-glutamate 5-semialdehyde + phosphate + NADP(+) = L-glutamyl 5-phosphate + NADPH + H(+). It participates in amino-acid biosynthesis; L-proline biosynthesis; L-glutamate 5-semialdehyde from L-glutamate: step 2/2. Functionally, catalyzes the NADPH-dependent reduction of L-glutamate 5-phosphate into L-glutamate 5-semialdehyde and phosphate. The product spontaneously undergoes cyclization to form 1-pyrroline-5-carboxylate. The sequence is that of Gamma-glutamyl phosphate reductase from Nautilia profundicola (strain ATCC BAA-1463 / DSM 18972 / AmH).